We begin with the raw amino-acid sequence, 116 residues long: Peptidyl-tRNA hydrolase (116 aa).

This sequence belongs to the PTH2 family.

The protein localises to the cytoplasm. It carries out the reaction an N-acyl-L-alpha-aminoacyl-tRNA + H2O = an N-acyl-L-amino acid + a tRNA + H(+). Functionally, the natural substrate for this enzyme may be peptidyl-tRNAs which drop off the ribosome during protein synthesis. This Methanococcus maripaludis (strain DSM 14266 / JCM 13030 / NBRC 101832 / S2 / LL) protein is Peptidyl-tRNA hydrolase (pth).